Consider the following 113-residue polypeptide: U11-theraphotoxin-Hhn1e (113 aa).

The first 21 residues, 1–21, serve as a signal peptide directing secretion; the sequence is MNTVRVTFLLVFVLAVSLGQA. Residues 22 to 74 constitute a propeptide that is removed on maturation; that stretch reads DKDENRMEMLEKTEQGKSYLDFAENLLLQKLEELEARLLEEDSEESRNSRQKR. Over residues 60 to 69 the composition is skewed to basic and acidic residues; the sequence is LEEDSEESRN. Residues 60 to 87 form a disordered region; it reads LEEDSEESRNSRQKRCIGEGVPRDENDP. Intrachain disulfides connect Cys-75/Cys-90 and Cys-89/Cys-110.

It belongs to the neurotoxin 14 (magi-1) family. 01 (HNTX-16) subfamily. In terms of tissue distribution, expressed by the venom gland.

The protein resides in the secreted. In terms of biological role, probable ion channel inhibitor. This Cyriopagopus hainanus (Chinese bird spider) protein is U11-theraphotoxin-Hhn1e.